The following is a 1594-amino-acid chain: MAAAAVVVPAEWIKNWEKSGRGEFLHLCRILSENKSHDSSTYRDFQQALYELSYHVIKGNLKHEQASSVLNDISEFREDMPSILADVFCILDIETNCLEEKSKRDYFTQLVLACLYLVSDTVLKERLDPETLESLGLIKQSQQFNQKSVKIKTKLFYKQQKFNLLREENEGYAKLIAELGQDLSGNITSDLILENIKSLIGCFNLDPNRVLDVILEVFECRPEHDDFFISLLESYMSMCEPQTLCHILGFKFKFYQEPSGETPSSLYRVAAVLLQFNLIDLDDLYVHLLPADNCIMDEYKREIVEAKQIVRKLTMVVLSSEKLDERDKEKDKDDEKVEKPPDNQKLGLLEALLKVGDWQHAQNIMDQMPPYYAASHKLIALAICKLIHITVEPLYRRVGVPKGAKGSPVSALQNKRAPKQVESFEDLRRDVFNMFCYLGPHLSHDPILFAKVVRIGKSFMKEFQSDGSKQEDKEKTEVILSCLLSITDQVLLPSLSLMDCNACMSEELWGMFKTFPYQHRYRLYGQWKNETYNGHPLLVKVKAQTIDRAKYIMKRLTKENVKPSGRQIGKLSHSNPTILFDYILSQIQKYDNLITPVVDSLKYLTSLNYDVLAYCIIEALANPEKERMKHDDTTISSWLQSLASFCGAVFRKYPIDLAGLLQYVANQLKAGKSFDLLILKEVVQKMAGIEITEEMTMEQLEAMTGGEQLKAEGGYFGQIRNTKKSSQRLKDALLDHDLALPLCLLMAQQRNGVIFQEGGEKHLKLVGKLYDQCHDTLVQFGGFLASNLSTEDYIKRVPSIDVLCNEFHTPHDAAFFLSRPMYAHHISSKYDELKKSEKGSKQQHKVHKYITSCEMVMAPVHEAVVSLHVSKVWDDISPQFYATFWSLTMYDLAVPHTSYEREVNKLKVQMKAIDDNQEMPPNKKKKEKERCTALQDKLLEEEKKQMEHVQRVLQRLKLEKDNWLLAKSTKNETITKFLQLCIFPRCIFSAIDAVYCARFVELVHQQKTPNFSTLLCYDRVFSDIIYTVASCTENEASRYGRFLCCMLETVTRWHSDRATYEKECGNYPGFLTILRATGFDGGNKADQLDYENFRHVVHKWHYKLTKASVHCLETGEYTHIRNILIVLTKILPWYPKVLNLGQALERRVNKICQEEKEKRPDLYALAMGYSGQLKSRKSHMIPENEFHHKDPPPRNAVASVQNGPGGGTSSSSIGNASKSDESGAEETDKSRERSQCGTKAVNKASSTTPKGNSSNGNSGSNSNKAVKENDKEKVKEKEKEKKEKTPATTPEARALGKDSKEKPKEERPNKEDKARETKERTPKSDKEKEKFKKEEKAKDEKFKTTVPIVESKSTQEREREKEPSRERDVAKEMKSKENVKGGEKTPVSGSLKSPVPRSDISEPDREQKRRKIDSHPSPSHSSTVKDSLIDLKDSSAKLYINHNPPPLSKSKEREMDKKDLDKSRERSREREKKDEKDRKERKRDHSNNDREVPPDITKRRKEENGTMGVSKHKSESPCESQYPNEKDKEKNKSKSSGKEKSSSDSFKSEKMDKISSGGKKESRHDKEKIEKKEKRDSSGGKEEKKHHKSSDKHR.

The segment at 1 to 163 (MAAAAVVVPA…KLFYKQQKFN (163 aa)) is anchor domain; interaction with THOC5 and THOC7. The bow domain; interaction with THOC1 dock domain and THOC3 stretch occupies residues 164–534 (LLREENEGYA…GQWKNETYNG (371 aa)). The segment at 535–686 (HPLLVKVKAQ…LILKEVVQKM (152 aa)) is MIF4G domain; interaction with THOC3 and DDX39B. The segment at 687 to 1174 (AGIEITEEMT…LAMGYSGQLK (488 aa)) is stern domain. Residues 896-965 (HTSYEREVNK…LKLEKDNWLL (70 aa)) are a coiled coil. A Nuclear localization signal motif is present at residues 923–928 (KKKKEK). Residues 1175-1594 (SRKSHMIPEN…KHHKSSDKHR (420 aa)) form a charged domain region. 2 stretches are compositionally biased toward basic and acidic residues: residues 1183–1192 (ENEFHHKDPP) and 1218–1234 (KSDE…RERS). Residues 1183–1594 (ENEFHHKDPP…KHHKSSDKHR (412 aa)) form a disordered region. Position 1222 is a phosphoserine (Ser1222). Positions 1251 to 1264 (GNSSNGNSGSNSNK) are enriched in low complexity. 3 stretches are compositionally biased toward basic and acidic residues: residues 1265 to 1285 (AVKE…KEKT), 1294 to 1343 (ALGK…EKFK), and 1353 to 1383 (STQE…KGGE). Thr1385 is modified (phosphothreonine). Ser1390, Ser1393, Ser1417, Ser1450, Ser1486, and Ser1516 each carry phosphoserine. A compositionally biased stretch (polar residues) spans 1416 to 1425 (PSPSHSSTVK). Residues 1449 to 1504 (KSKEREMDKKDLDKSRERSREREKKDEKDRKERKRDHSNNDREVPPDITKRRKEEN) show a composition bias toward basic and acidic residues. The stretch at 1464-1491 (RERSREREKKDEKDRKERKRDHSNNDRE) forms a coiled coil. Over residues 1524–1583 (NEKDKEKNKSKSSGKEKSSSDSFKSEKMDKISSGGKKESRHDKEKIEKKEKRDSSGGKEE) the composition is skewed to basic and acidic residues. The span at 1584–1594 (KKHHKSSDKHR) shows a compositional bias: basic residues.

Belongs to the THOC2 family. Component of the THO subcomplex, which is composed of THOC1, THOC2, THOC3, THOC5, THOC6 and THOC7. The THO subcomplex interacts with DDX39B to form the THO-DDX39B complex which multimerizes into a 28-subunit tetrameric assembly. Component of the transcription/export (TREX) complex at least composed of ALYREF/THOC4, DDX39B, SARNP/CIP29, CHTOP and the THO subcomplex; in the complex interacts with THOC1, THOC3, THOC5, THOC7 and DDX39B. TREX seems to have a dynamic structure involving ATP-dependent remodeling. Interacts with POLDIP3. Interacts with ZC3H11A. Expressed in the hippocampus and the cortical neurons.

The protein localises to the nucleus. It localises to the nucleus speckle. Its subcellular location is the cytoplasm. In terms of biological role, component of the THO subcomplex of the TREX complex which is thought to couple mRNA transcription, processing and nuclear export, and which specifically associates with spliced mRNA and not with unspliced pre-mRNA. Required for efficient export of polyadenylated RNA and spliced mRNA. The THOC1-THOC2-THOC3 core complex alone is sufficient to bind export factor NXF1-NXT1 and promote ATPase activity of DDX39B; in the complex THOC2 is the only component that directly interacts with DDX39B. TREX is recruited to spliced mRNAs by a transcription-independent mechanism, binds to mRNA upstream of the exon-junction complex (EJC) and is recruited in a splicing- and cap-dependent manner to a region near the 5' end of the mRNA where it functions in mRNA export to the cytoplasm via the TAP/NXF1 pathway. Required for NXF1 localization to the nuclear rim. THOC2 (and probably the THO complex) is involved in releasing mRNA from nuclear speckle domains. Plays a role for proper neuronal development. The chain is THO complex subunit 2 (Thoc2) from Mus musculus (Mouse).